The chain runs to 1368 residues: MAYSFTEKKRIRKSFAKRATVHQVPFLLATQIESYTQFLQADTPPARRKTEGLQAAFNAIFPISSHNGLARMEFVSYHLSNPPFDVKECQQRGLTFHSALRAKVRLIINDRENPGKVKEVKEQEVYMGEIPLMTSTGSFVINGTERVIVSQLHRSPGVFFEHDKGKTHSSGKLLFSARIIPYRGSWLDFEFDPKDILYFRVDRRRKMPVTILLKSIGLTPEQILAHFFVFDNFTLQSEGAQLEFVPERLRGEVARFDIADKNGRVVVEKDKRINAKHIRDLDSAGTKLISVPEDYLLGRVLAKNIIDPDTGEVIANANDELTEALLENLREAGVKQIQTLYTNDLDQGPYMSQTLRVDETADQTAARIAIYRMMRPGEPPTEEAVEALFQRLFYSEESYDLSRVGRMKVNSRLGRPSGEGAMVLQDEDILETIKILVNLRNGKGEVDDIDHLGNRRVRCVGELAENQFRAGLSRVERAVKERLGQAETENLMPHDLINSKPISSAIREFFGSSQLSQFMDQTNPLSEITHKRRVSALGPGGLTRERAGFEVRDVHPTHYGRVCPIETPEGPNIGLINSLALYARLNEYGFLETPYRKVVDSKLTDEVDYLSAIEEGKYVVAQANATVDADGNLTDELVSAREGSERETRMVTPDRVQYIDVAPSQIVSAAASLVPFLEHDDANRALMGANMQRQAVPCLRPDKPLVGTGIERTVAVDSGTAVQAMRGGVVDYVDAMRIVIRVNDDEAVAGEVGVDIYNLIKYTRSNQNTNINQRPMVKVGDHVARGDVIADGASTDLGELALGQNMLVAFMPWNGYNFEDSILISERVVAEDRYTSIHIEELSVVARDTKLGPEEITRDISNLAEAQLARLDESGITYIGAEVEAGDVLVGKVTPKGETQLTPEEKLLRAIFGEKASDVKDTSLRVPSGMSGIVIDVQVFTREGVTRDKRAQSIIDDELKRYRLDLNDQLRIVEGDAFQRLERLLVDKTVNGGPKKLAKGAKITKEYLADIDKYHWFDIRPADEELAAQLEAVKEAIEQKRHEFDLAFEEKRKKLTQGDELPPGVIKMVKVYLAVKRRLQPGDKMAGRHGNKGVVSKIVPIEDMPYMADGTPADIVLNPLGVPSRMNVGQILETHLGWAARGLGQRIGDMLKAQAKAQELRTLLSQIYNESGKPEDLDSLSDAEVLELANNLKKGVPFATPVFDGAHEDEIRRMLDLAYPDDVAREKGLTASKQQVTLFDGRTGEAFERPVTLGVMHMLKLHHLVDDKMHARSTGPYSLVTQQPLGGKAQFGGQRFGEMEVWALEAYGASYVLQEMLTVKSDDVNGRTKVYENIVKGEHSIDAGMPESFNVLVKEIRSLGIDIDLDRY.

This sequence belongs to the RNA polymerase beta chain family. The RNAP catalytic core consists of 2 alpha, 1 beta, 1 beta' and 1 omega subunit. When a sigma factor is associated with the core the holoenzyme is formed, which can initiate transcription.

It carries out the reaction RNA(n) + a ribonucleoside 5'-triphosphate = RNA(n+1) + diphosphate. Its function is as follows. DNA-dependent RNA polymerase catalyzes the transcription of DNA into RNA using the four ribonucleoside triphosphates as substrates. In Cupriavidus taiwanensis (strain DSM 17343 / BCRC 17206 / CCUG 44338 / CIP 107171 / LMG 19424 / R1) (Ralstonia taiwanensis (strain LMG 19424)), this protein is DNA-directed RNA polymerase subunit beta.